Reading from the N-terminus, the 316-residue chain is tRNA(Ile)-lysidine synthase (316 aa).

33–38 (SGGTDS) serves as a coordination point for ATP.

This sequence belongs to the tRNA(Ile)-lysidine synthase family.

It localises to the cytoplasm. The catalysed reaction is cytidine(34) in tRNA(Ile2) + L-lysine + ATP = lysidine(34) in tRNA(Ile2) + AMP + diphosphate + H(+). In terms of biological role, ligates lysine onto the cytidine present at position 34 of the AUA codon-specific tRNA(Ile) that contains the anticodon CAU, in an ATP-dependent manner. Cytidine is converted to lysidine, thus changing the amino acid specificity of the tRNA from methionine to isoleucine. This Bdellovibrio bacteriovorus (strain ATCC 15356 / DSM 50701 / NCIMB 9529 / HD100) protein is tRNA(Ile)-lysidine synthase.